Consider the following 49-residue polypeptide: Large ribosomal subunit protein bL33 (49 aa).

This sequence belongs to the bacterial ribosomal protein bL33 family.

In Streptococcus suis (strain 98HAH33), this protein is Large ribosomal subunit protein bL33.